The primary structure comprises 378 residues: Dual-specificity RNA methyltransferase RlmN (378 aa).

Glutamate 95 acts as the Proton acceptor in catalysis. Residues 101–345 (EETRGTLCVS…TTIRKTRGDD (245 aa)) form the Radical SAM core domain. Cysteines 108 and 350 form a disulfide. The [4Fe-4S] cluster site is built by cysteine 115, cysteine 119, and cysteine 122. Residues 176–177 (GE), serine 208, 230–232 (SLH), and asparagine 307 contribute to the S-adenosyl-L-methionine site. The active-site S-methylcysteine intermediate is the cysteine 350.

It belongs to the radical SAM superfamily. RlmN family. [4Fe-4S] cluster serves as cofactor.

The protein localises to the cytoplasm. It carries out the reaction adenosine(2503) in 23S rRNA + 2 reduced [2Fe-2S]-[ferredoxin] + 2 S-adenosyl-L-methionine = 2-methyladenosine(2503) in 23S rRNA + 5'-deoxyadenosine + L-methionine + 2 oxidized [2Fe-2S]-[ferredoxin] + S-adenosyl-L-homocysteine. The catalysed reaction is adenosine(37) in tRNA + 2 reduced [2Fe-2S]-[ferredoxin] + 2 S-adenosyl-L-methionine = 2-methyladenosine(37) in tRNA + 5'-deoxyadenosine + L-methionine + 2 oxidized [2Fe-2S]-[ferredoxin] + S-adenosyl-L-homocysteine. Functionally, specifically methylates position 2 of adenine 2503 in 23S rRNA and position 2 of adenine 37 in tRNAs. m2A2503 modification seems to play a crucial role in the proofreading step occurring at the peptidyl transferase center and thus would serve to optimize ribosomal fidelity. This chain is Dual-specificity RNA methyltransferase RlmN, found in Burkholderia thailandensis (strain ATCC 700388 / DSM 13276 / CCUG 48851 / CIP 106301 / E264).